A 184-amino-acid chain; its full sequence is dCTP deaminase (184 aa).

DCTP is bound at residue 107-112; that stretch reads KSTYAR. E133 (proton donor/acceptor) is an active-site residue. DCTP is bound by residues Q152, Y166, and Q176.

This sequence belongs to the dCTP deaminase family. In terms of assembly, homotrimer.

It catalyses the reaction dCTP + H2O + H(+) = dUTP + NH4(+). It participates in pyrimidine metabolism; dUMP biosynthesis; dUMP from dCTP (dUTP route): step 1/2. Catalyzes the deamination of dCTP to dUTP. The chain is dCTP deaminase from Herpetosiphon aurantiacus (strain ATCC 23779 / DSM 785 / 114-95).